The primary structure comprises 449 residues: Capsid protein (449 aa).

The interval 1 to 43 is DNA-binding; that stretch reads MARRARRPRGRFYAFRRGRWHHLKRLRRRYKFRHRRRQRYRRR. The nuclear localization signals stretch occupies residues 6-47; it reads RRPRGRFYAFRRGRWHHLKRLRRRYKFRHRRRQRYRRRAFRK.

It belongs to the gyrovirus capsid protein family. In terms of assembly, homomultimer (Potential). Interacts with Rep; this interaction relocates Rep into the nucleus.

Its subcellular location is the host nucleus. It is found in the virion. In terms of biological role, self-assembles to form the virion icosahedral capsid with a T=1 symmetry. This very small capsid (25 nm in diameter) allows the virus to be very stable in the environment and resistant to some disinfectants, including detergents. Essential for the initial attachment to host receptors. After attachment, the virus is endocytosed and traffics to the nucleus. The capsid protein binds and transports the viral genome and Rep across the nuclear envelope. This Chicken anemia virus (isolate Australia) (CAV) protein is Capsid protein (VP1).